The primary structure comprises 126 residues: Protein C10 (126 aa).

The residue at position 2 (Ala2) is an N-acetylalanine.

The protein belongs to the UPF0456 family. In terms of tissue distribution, ubiquitously expressed, with higher expression in lung and fetal brain.

It localises to the cytoplasm. Its function is as follows. In brain, may be required for corpus callosum development. This is Protein C10 (C12orf57) from Homo sapiens (Human).